Consider the following 416-residue polypeptide: Acyl-coenzyme A amino acid N-acyltransferase 1 (416 aa).

Serine 125 is modified (phosphoserine). Residues serine 235, aspartate 325, and histidine 359 each act as charge relay system in the active site. A Phosphoserine modification is found at serine 414. Positions 414–416 match the Microbody targeting signal motif; it reads SKL.

It belongs to the C/M/P thioester hydrolase family. Expressed mainly in liver and kidney with low levels in adrenal and little or no expression in other tissues.

The protein resides in the peroxisome. It catalyses the reaction tetracosanoyl-CoA + taurine = N-tetracosanoyl-taurine + CoA + H(+). It carries out the reaction eicosanoyl-CoA + taurine = N-eicosanoyl-taurine + CoA + H(+). The catalysed reaction is taurine + octadecanoyl-CoA = N-octadecanoyl-taurine + CoA + H(+). The enzyme catalyses taurine + hexadecanoyl-CoA = N-hexadecanoyl-taurine + CoA + H(+). It catalyses the reaction tetradecanoyl-CoA + taurine = N-tetradecanoyl-taurine + CoA + H(+). It carries out the reaction dodecanoyl-CoA + taurine = N-dodecanoyl-taurine + CoA + H(+). Functionally, acyltransferase which efficiently conjugates very long-chain and long-chain fatty acids to taurine. Shows no conjugation activity in the presence of glycine. The polypeptide is Acyl-coenzyme A amino acid N-acyltransferase 1 (Mus musculus (Mouse)).